The sequence spans 72 residues: Small ribosomal subunit protein bS20 (72 aa).

The protein belongs to the bacterial ribosomal protein bS20 family.

Its function is as follows. Binds directly to 16S ribosomal RNA. This is Small ribosomal subunit protein bS20 (rpsT) from Klebsiella pneumoniae.